Reading from the N-terminus, the 743-residue chain is Alpha-N-acetylglucosaminidase (743 aa).

The signal sequence occupies residues 1 to 23; the sequence is MEAVAVAAAVGVLLLAGAGGAAG. N-linked (GlcNAc...) asparagine glycans are attached at residues Asn-261, Asn-272, Asn-435, Asn-503, Asn-526, and Asn-532.

Belongs to the glycosyl hydrolase 89 family. In terms of assembly, monomer and homodimer. In terms of tissue distribution, liver, ovary, peripheral blood leukocytes, testis, prostate, spleen, colon, lung, placenta and kidney.

It localises to the lysosome. It catalyses the reaction Hydrolysis of terminal non-reducing N-acetyl-D-glucosamine residues in N-acetyl-alpha-D-glucosaminides.. Functionally, involved in the degradation of heparan sulfate. The sequence is that of Alpha-N-acetylglucosaminidase (NAGLU) from Homo sapiens (Human).